We begin with the raw amino-acid sequence, 308 residues long: Uricase (308 aa).

Active-site charge relay system residues include lysine 5 and threonine 65. The urate site is built by threonine 65, aspartate 66, phenylalanine 177, arginine 194, isoleucine 242, glutamine 243, and asparagine 269. The interval 283–308 (ASVLREPPAPTGFQQFSMDRGDLDEQ) is disordered.

The protein belongs to the uricase family.

It catalyses the reaction urate + O2 + H2O = 5-hydroxyisourate + H2O2. It functions in the pathway purine metabolism; urate degradation; (S)-allantoin from urate: step 1/3. Its function is as follows. Catalyzes the oxidation of uric acid to 5-hydroxyisourate, which is further processed to form (S)-allantoin. The polypeptide is Uricase (Haloferax volcanii (strain ATCC 29605 / DSM 3757 / JCM 8879 / NBRC 14742 / NCIMB 2012 / VKM B-1768 / DS2) (Halobacterium volcanii)).